We begin with the raw amino-acid sequence, 814 residues long: Acyl-coenzyme A dehydrogenase (814 aa).

Glu-497 acts as the Proton acceptor in catalysis.

Belongs to the acyl-CoA dehydrogenase family. FAD is required as a cofactor.

It carries out the reaction a medium-chain 2,3-saturated fatty acyl-CoA + oxidized [electron-transfer flavoprotein] + H(+) = a medium-chain (2E)-enoyl-CoA + reduced [electron-transfer flavoprotein]. The catalysed reaction is a long-chain 2,3-saturated fatty acyl-CoA + oxidized [electron-transfer flavoprotein] + H(+) = a long-chain (2E)-enoyl-CoA + reduced [electron-transfer flavoprotein]. It participates in lipid metabolism; fatty acid beta-oxidation. Functionally, catalyzes the dehydrogenation of acyl-coenzymes A (acyl-CoAs) to 2-enoyl-CoAs, the first step of the beta-oxidation cycle of fatty acid degradation. Is required for S.typhimurium to utilize medium- and long-chain fatty acids as sole carbon sources for growth. Is needed for bacterial survival during carbone-source starvation. The sequence is that of Acyl-coenzyme A dehydrogenase (fadE) from Salmonella typhimurium (strain LT2 / SGSC1412 / ATCC 700720).